A 166-amino-acid polypeptide reads, in one-letter code: V-type proton ATPase subunit c4 (166 aa).

Residues 1 to 13 (MASSGFSGDETAP) are Lumenal-facing. A helical transmembrane segment spans residues 14-34 (FFGFLGAAAALVFSCMGAAYG). The Cytoplasmic segment spans residues 35-56 (TAKSGVGVASMGVMRPELVMKS). Residues 57–77 (IVPVVMAGVLGIYGLIIAVII) form a helical membrane-spanning segment. The Lumenal portion of the chain corresponds to 78 to 96 (STGINPKAKSYYLFDGYAH). A helical transmembrane segment spans residues 97-118 (LSSGLACGLAGLSAGMAIGIVG). The Cytoplasmic portion of the chain corresponds to 119-130 (DAGVRANAQQPK). A helical membrane pass occupies residues 131–156 (LFVGMILILIFAEALALYGLIVGIIL). The Lumenal portion of the chain corresponds to 157–166 (SSRAGQSRAE).

This sequence belongs to the V-ATPase proteolipid subunit family. V-ATPase is a heteromultimeric enzyme composed of a peripheral catalytic V1 complex (components A to H) attached to an integral membrane V0 proton pore complex (components: a, c, c'', d and e). The proteolipid components c and c'' are present as a hexameric ring that forms the proton-conducting pore. Interacts with APD2.

It localises to the vacuole membrane. In terms of biological role, proton-conducting pore forming subunit of the membrane integral V0 complex of vacuolar ATPase. V-ATPase is responsible for acidifying a variety of intracellular compartments in eukaryotic cells. This is V-type proton ATPase subunit c4 (VHA-c4) from Arabidopsis thaliana (Mouse-ear cress).